A 162-amino-acid polypeptide reads, in one-letter code: Putative pre-16S rRNA nuclease (162 aa).

It belongs to the YqgF nuclease family.

Its subcellular location is the cytoplasm. Its function is as follows. Could be a nuclease involved in processing of the 5'-end of pre-16S rRNA. This chain is Putative pre-16S rRNA nuclease, found in Brucella melitensis biotype 1 (strain ATCC 23456 / CCUG 17765 / NCTC 10094 / 16M).